A 764-amino-acid chain; its full sequence is Protein translocase subunit SecA 2 (764 aa).

Residues Q83, 101 to 105, and D490 contribute to the ATP site; that span reads GEGKT.

This sequence belongs to the SecA family. As to quaternary structure, monomer and homodimer. Part of the essential Sec protein translocation apparatus which comprises SecA, SecYEG and auxiliary proteins SecDF. Other proteins may also be involved.

The protein resides in the cell membrane. The protein localises to the cytoplasm. The catalysed reaction is ATP + H2O + cellular proteinSide 1 = ADP + phosphate + cellular proteinSide 2.. Part of the Sec protein translocase complex. Interacts with the SecYEG preprotein conducting channel. Has a central role in coupling the hydrolysis of ATP to the transfer of proteins into and across the cell membrane, serving as an ATP-driven molecular motor driving the stepwise translocation of polypeptide chains across the membrane. This Corynebacterium diphtheriae (strain ATCC 700971 / NCTC 13129 / Biotype gravis) protein is Protein translocase subunit SecA 2.